The primary structure comprises 251 residues: Gamma-gliadin (251 aa).

The signal sequence occupies residues 1 to 19; it reads MKTLLILTILAMAITIGTA. The tract at residues 26 to 143 is disordered; sequence SSQVQWPQQQ…QQSFPQQQPP (118 aa). Residues 42–81 are compositionally biased toward low complexity; the sequence is QPFSQQPQQTFPQPQQTFPHQPQQQFPQPQQPQQQFLQPQ. Residues 82–99 are compositionally biased toward pro residues; sequence QPFPQQPQQPYPQQPQQP. Residues 100–139 are compositionally biased toward low complexity; the sequence is FPQTQQPQQLFPQSQQPQQQFSQPQQQFPQPQQPQQSFPQ.

Belongs to the gliadin/glutenin family.

In terms of biological role, gliadin is the major seed storage protein in wheat. This chain is Gamma-gliadin, found in Triticum aestivum (Wheat).